The chain runs to 421 residues: Lipid II:glycine glycyltransferase (421 aa).

This sequence belongs to the FemABX family. Monomer.

It is found in the cytoplasm. It catalyses the reaction beta-D-GlcNAc-(1-&gt;4)-Mur2Ac(oyl-L-Ala-D-isoglutaminyl-L-Lys-D-Ala-D-Ala)-di-trans,octa-cis-undecaprenyl diphosphate + glycyl-tRNA(Gly) = beta-D-GlcNAc-(1-&gt;4)-Mur2Ac(oyl-L-Ala-D-isoglutaminyl-L-Lys-(N(6)-Gly)-D-Ala-D-Ala)-di-trans,octa-cis-undecaprenyl diphosphate + tRNA(Gly) + H(+). Its function is as follows. Catalyzes the incorporation of the first glycine of the pentaglycine interpeptide bridge, which is characteristic of the S.aureus peptidoglycan. This glycine is added to the epsilon-amino group of the L-lysine of the membrane-bound lipid II intermediate (GlcNAc-(beta-1,4)-N-acetylmuramic acid(-L-Ala-D-iGln-L-Lys-D-Ala-D-Ala)-pyrophosphoryl-undecaprenol), using glycyl-tRNA(Gly) as donor, in a ribosome-independent mechanism. Involved in methicillin resistance. The chain is Lipid II:glycine glycyltransferase (femX) from Staphylococcus aureus (strain MRSA252).